The primary structure comprises 123 residues: Thioredoxin H-type 1 (123 aa).

Ala-2 bears the N-acetylalanine mark. The 118-residue stretch at 2 to 119 folds into the Thioredoxin domain; that stretch reads AATAEVIPAG…IEAKLLKHSQ (118 aa). The cysteines at positions 45 and 48 are disulfide-linked.

The protein belongs to the thioredoxin family. Plant H-type subfamily.

It is found in the cytoplasm. Its function is as follows. Participates in various redox reactions through the reversible oxidation of the active center dithiol to a disulfide. The H form is known to activate a number of cytosolic enzymes. The chain is Thioredoxin H-type 1 (THL-1) from Brassica napus (Rape).